The sequence spans 450 residues: Magnesium transporter MgtE (450 aa).

The Cytoplasmic segment spans residues Met-1–Leu-283. Mg(2+) contacts are provided by Glu-59, Asp-91, Asp-95, and Gly-136. CBS domains are found at residues Met-138 to Glu-200 and Met-202 to Glu-258. Residues Tyr-170, Ser-185, Arg-187, Asp-188, and Val-207 each coordinate ATP. Mg(2+) is bound by residues Glu-216, Ala-223, Asp-226, Asp-247, Asp-250, Glu-255, Glu-258, and Asp-259. Glu-275 serves as a coordination point for Ca(2+). Positions 275, 304, 307, and 311 each coordinate Mn(2+). The helical transmembrane segment at Ala-284–Phe-306 threads the bilayer. Over Glu-307–Ala-315 the chain is Periplasmic. Glu-311 is a Ca(2+) binding site. The chain crosses the membrane as a helical span at residues Leu-316–Leu-337. The Cytoplasmic segment spans residues Ile-338–Asp-351. The helical transmembrane segment at Trp-352–Asp-381 threads the bilayer. At Gly-382–Leu-385 the chain is on the periplasmic side. His-383 is a binding site for Mn(2+). Residues Leu-386–Pro-409 traverse the membrane as a helical segment. Residues Phe-410–Ala-420 lie on the Cytoplasmic side of the membrane. Residues Asp-418, Ala-428, and Asp-432 each coordinate Mg(2+). A helical membrane pass occupies residues Leu-421 to Ala-443. At Arg-444–Val-450 the chain is on the periplasmic side.

It belongs to the SLC41A transporter family. As to quaternary structure, homodimer.

It localises to the cell inner membrane. It catalyses the reaction Mg(2+)(in) = Mg(2+)(out). Its activity is regulated as follows. The channel activity is regulated via the N-terminal cytoplasmic region, which acts as a Mg(2+) sensor to regulate the gating of the ion-conducting pore in response to the intracellular magnesium concentration. Under high-intracellular magnesium conditions, binding of magnesium to the N-terminal cytoplasmic domain stabilizes the closed conformation of the channel. Under low-intracellular magnesium conditions, the channel is in equilibrium between the open and closed states. A cation-binding site within the membrane (M1) strictly recognizes the size and geometry of the Mg(2+) hydration shells, which may be important for the selective transport of Mg(2+) over other cations. Cation-binding sites on the periplasmic side (M2 and M3) regulate channel opening and prevent conduction of near-cognate cations. Binding of Mn(2+) to the periplasmic sites strongly inhibits the Mg(2+) transport activity. In addition, activity is regulated by ATP, which binds to MgtE and modulates its Mg(2+)-dependent channel gating. ATP binding enhances the intracellular domain affinity for Mg(2+) within physiological concentrations of this divalent cation, enabling MgtE to function as an in vivo Mg(2+) sensor. ATP dissociation from MgtE upregulates Mg(2+) influx at both high and low intracellular Mg(2+) concentrations. Its function is as follows. Highly selective magnesium channel that plays an important role in Mg(2+) homeostasis. Functions as a Mg(2+)-dependent gating channel. Exhibits low activity with cobalt, suggesting that it might also be involved in the uptake of Co(2+) as a micronutrient. Also exhibits low activity with Ca(2+), but it shows almost no activity with Mn(2+). The protein is Magnesium transporter MgtE of Thermus thermophilus (strain ATCC 27634 / DSM 579 / HB8).